The sequence spans 58 residues: Large ribosomal subunit protein uL30 (58 aa).

Belongs to the universal ribosomal protein uL30 family. In terms of assembly, part of the 50S ribosomal subunit.

This Desulfovibrio desulfuricans (strain ATCC 27774 / DSM 6949 / MB) protein is Large ribosomal subunit protein uL30.